We begin with the raw amino-acid sequence, 282 residues long: Ribosome-inactivating protein bryodin II (282 aa).

Positions Met-1–Asp-21 are cleaved as a signal peptide. A glycan (N-linked (GlcNAc...) asparagine) is linked at Asn-25. Residue Glu-183 is part of the active site.

The protein belongs to the ribosome-inactivating protein family. Type 1 RIP subfamily.

The enzyme catalyses Endohydrolysis of the N-glycosidic bond at one specific adenosine on the 28S rRNA.. Functionally, ribosome-inactivating protein of type 1, inhibits protein synthesis in animal cells. The sequence is that of Ribosome-inactivating protein bryodin II from Bryonia dioica (Red bryony).